The chain runs to 714 residues: Probable serine/threonine-protein kinase mkcB (714 aa).

The segment covering 1-12 (MKSILKKAKHFF) has biased composition (basic residues). Disordered stretches follow at residues 1-267 (MKSI…SSTS) and 281-349 (GSGS…EQKP). Residues 23–35 (GGEKTAKESESQQ) are compositionally biased toward basic and acidic residues. Over residues 62 to 83 (SQSQPTTSALQTSTSLQPSSSL) the composition is skewed to low complexity. Positions 84–94 (HQIPQSQSSLE) are enriched in polar residues. 2 stretches are compositionally biased toward low complexity: residues 95-111 (LTTN…TKQL) and 120-166 (PHSQ…TLTT). Over residues 167–177 (PVPSSENLATL) the composition is skewed to polar residues. Low complexity-rich tracts occupy residues 178 to 241 (STST…QEQT) and 254 to 267 (LSQS…SSTS). Residues 282–294 (SGSTKNKDSSSAP) are compositionally biased toward polar residues. Low complexity-rich tracts occupy residues 300–314 (NNNN…KNRS) and 324–337 (NNNN…KNNN). The Protein kinase domain maps to 438–687 (YKDSDQVGKG…AEELLKHPFI (250 aa)). Residues 444-452 (VGKGGFGTV) and Lys467 contribute to the ATP site. Asp558 functions as the Proton acceptor in the catalytic mechanism.

The protein belongs to the protein kinase superfamily. STE Ser/Thr protein kinase family. STE20 subfamily. The cofactor is Mg(2+). In terms of tissue distribution, expressed at equal levels in prestalk and prespore cells.

It carries out the reaction L-seryl-[protein] + ATP = O-phospho-L-seryl-[protein] + ADP + H(+). The catalysed reaction is L-threonyl-[protein] + ATP = O-phospho-L-threonyl-[protein] + ADP + H(+). The chain is Probable serine/threonine-protein kinase mkcB from Dictyostelium discoideum (Social amoeba).